The primary structure comprises 103 residues: Histone H4 (103 aa).

Residues 1-14 are compositionally biased toward gly residues; that stretch reads MSGRGKGGKGLGKG. The disordered stretch occupies residues 1-20; it reads MSGRGKGGKGLGKGGAKRHR. Residues 17–21 mediate DNA binding; that stretch reads KRHRK.

The protein belongs to the histone H4 family. As to quaternary structure, the nucleosome is a histone octamer containing two molecules each of H2A, H2B, H3 and H4 assembled in one H3-H4 heterotetramer and two H2A-H2B heterodimers. The octamer wraps approximately 147 bp of DNA.

The protein localises to the nucleus. It is found in the chromosome. In terms of biological role, core component of nucleosome. Nucleosomes wrap and compact DNA into chromatin, limiting DNA accessibility to the cellular machineries which require DNA as a template. Histones thereby play a central role in transcription regulation, DNA repair, DNA replication and chromosomal stability. DNA accessibility is regulated via a complex set of post-translational modifications of histones, also called histone code, and nucleosome remodeling. The protein is Histone H4 (H4-I) of Volvox carteri (Green alga).